A 290-amino-acid polypeptide reads, in one-letter code: Ribonuclease HIII (290 aa).

Residues 78 to 290 (LPLIGTDEVG…FKNTEKAKNA (213 aa)) form the RNase H type-2 domain. The a divalent metal cation site is built by Asp84, Glu85, and Asp187.

The protein belongs to the RNase HII family. RnhC subfamily. It depends on Mn(2+) as a cofactor. Requires Mg(2+) as cofactor.

The protein resides in the cytoplasm. The enzyme catalyses Endonucleolytic cleavage to 5'-phosphomonoester.. Functionally, endonuclease that specifically degrades the RNA of RNA-DNA hybrids. The polypeptide is Ribonuclease HIII (Streptococcus pneumoniae serotype 2 (strain D39 / NCTC 7466)).